The primary structure comprises 2214 residues: Non-reducing polyketide synthase dpmpA (2214 aa).

Positions 75 to 178 are N-terminal acylcarrier protein transacylase domain (SAT); that stretch reads EWIRTGDSHV…LAVCAGAWKD (104 aa). The Ketosynthase family 3 (KS3) domain maps to 372–784; it reads DESIAIVGAS…GNNTAMIVCQ (413 aa). Active-site for beta-ketoacyl synthase activity residues include C532, H667, and H707. The interval 888–1184 is malonyl-CoA:ACP transacylase (MAT) domain; the sequence is VFAGQTGHRP…AFLSARLGSP (297 aa). S974 acts as the For acyl/malonyl transferase activity in catalysis. The interval 1255–1389 is N-terminal hotdog fold; sequence PQLVSVVRSS…GIIKSQEQDR (135 aa). In terms of domain architecture, PKS/mFAS DH spans 1255 to 1566; that stretch reads PQLVSVVRSS…FSKVPVRSLQ (312 aa). Residues 1265–1560 are product template (PT) domain; that stretch reads GGADPEAAEF…AILGARFSKV (296 aa). The tract at residues 1416-1566 is C-terminal hotdog fold; that stretch reads GASVVQGAFV…FSKVPVRSLQ (151 aa). Carrier domains lie at 1620-1695 and 1722-1802; these read NEVK…HSRL and KAST…SGAD. At S1654 the chain carries O-(pantetheine 4'-phosphoryl)serine. Positions 1698-1728 are disordered; it reads VPQLSPHDTDRSSDLSAGQPPSTPKASTQEQ. Residues 1711 to 1726 show a composition bias toward polar residues; sequence DLSAGQPPSTPKASTQ. At S1762 the chain carries O-(pantetheine 4'-phosphoryl)serine. The tract at residues 1805-1827 is disordered; it reads GFPRTSDNRRSEEGSVGHVGPEK. The span at 1810–1827 shows a compositional bias: basic and acidic residues; the sequence is SDNRRSEEGSVGHVGPEK. Positions 1958 to 2210 are methyltransferase (CMeT) domain; the sequence is FPAYRPDHRL…SREADLFRWI (253 aa).

It participates in secondary metabolite biosynthesis; terpenoid biosynthesis. Functionally, non-reducing polyketide synthase; part of the gene cluster that mediates the biosynthesis of diterpenoid pyrones. The first step of the pathway is the synthesis of the alpha-pyrone moiety by the polyketide synthase dpmpA via condensation of one acetyl-CoA starter unit with 3 malonyl-CoA units and 2 methylations. The alpha-pyrone is then combined with geranylgeranyl pyrophosphate (GGPP) formed by the GGPP synthase dpmpD through the action of the prenyltransferase dpmpC to yield a linear alpha-pyrone diterpenoid. Subsequent steps in the diterpenoid pyrone biosynthetic pathway involve the decalin core formation, which is initiated by the epoxidation of the C10-C11 olefin by the FAD-dependent oxidoreductase dpmpE, and is followed by a cyclization cascade catalyzed by the terpene cyclase dpmpB. The short chain dehydrogenase/reductase dpmpG then oxidizes the 8S hydroxy group to a ketone and the short chain dehydrogenase/reductase dpmpH reduces the ketone to the 8R hydroxy group to yield higginsianin B. Higginsianin B is further methylated by the methyltransferase dpmpI to produce the intermediate named FDDP B. The cytochrome P450 monooxygenase dpmpJ then oxidizes the C-26 methyl to primary alcohol, producing the final diterpenoid pyrone with a C-26 primary alcohol on the gamma-pyrone moiety named FDDP C. This is Non-reducing polyketide synthase dpmpA from Macrophomina phaseolina (strain MS6) (Charcoal rot fungus).